A 229-amino-acid polypeptide reads, in one-letter code: DNA repair protein RecO (229 aa).

This sequence belongs to the RecO family.

Functionally, involved in DNA repair and RecF pathway recombination. The protein is DNA repair protein RecO of Legionella pneumophila (strain Paris).